We begin with the raw amino-acid sequence, 442 residues long: tRNA-2-methylthio-N(6)-dimethylallyladenosine synthase (442 aa).

The region spanning 5–122 (KKVFIKTLGC…LPEMIKQKQK (118 aa)) is the MTTase N-terminal domain. The [4Fe-4S] cluster site is built by Cys-14, Cys-51, Cys-85, Cys-159, Cys-163, and Cys-166. The Radical SAM core domain maps to 145 to 378 (KAEGAKAYVS…DLLNSNAQII (234 aa)). The TRAM domain occupies 380-442 (RQMVGTNQRI…LPNSLRGELI (63 aa)).

This sequence belongs to the methylthiotransferase family. MiaB subfamily. As to quaternary structure, monomer. It depends on [4Fe-4S] cluster as a cofactor.

Its subcellular location is the cytoplasm. It catalyses the reaction N(6)-dimethylallyladenosine(37) in tRNA + (sulfur carrier)-SH + AH2 + 2 S-adenosyl-L-methionine = 2-methylsulfanyl-N(6)-dimethylallyladenosine(37) in tRNA + (sulfur carrier)-H + 5'-deoxyadenosine + L-methionine + A + S-adenosyl-L-homocysteine + 2 H(+). Its function is as follows. Catalyzes the methylthiolation of N6-(dimethylallyl)adenosine (i(6)A), leading to the formation of 2-methylthio-N6-(dimethylallyl)adenosine (ms(2)i(6)A) at position 37 in tRNAs that read codons beginning with uridine. The polypeptide is tRNA-2-methylthio-N(6)-dimethylallyladenosine synthase (Francisella tularensis subsp. tularensis (strain FSC 198)).